A 572-amino-acid chain; its full sequence is MKASQFLFATLKETPSDADIASSQLMVRAGLIRKIASGLYIWLPMGLRVLQKVERIVREEMQNIGAQEVLMPMTQPAELWQLTGRFNDYGPELLRFKDRHDRDFVLGPTHEEVITNLAQGELRSYKQLPITFFQIQNKFRDEIRPRFGVMRAREFTMKDAYSFHVDQASLAKTYDEMYDAYTRIFTRLGLDFRAVQADTGSIGGFASHEFHVLADSGEDDIAFSDSSEYAANVELAESVSMAERQPATMARENIDTVNMPTCEAVAEHLNVPLATTVKTLIVQGHTPEGEPQLIAVVLRGDHTLNTIKAEKIEEANVPLMMATEEELKAAGLHKGYIGVELNMPVFVDRAAAALSDFVSGANEINKHTTGMNWERDAHITRIVDIRNVHEGDPSPDGKGTLQIKRGIEVGHIFQLGDKYSQAMNCTVSGEDGKPVTLMMGCYGIGVSRIIAAAIEQNNDENGIMWPSTPDISDSLAPFEVAIVPMKSKEDTVMETATALYEELKALGINVLLDDRNERPGVKFADLELIGIPHRIVVSDRNLAEDKYEYVNRRDSEKQLLSRDEVIAKVSGK.

It belongs to the class-II aminoacyl-tRNA synthetase family. ProS type 1 subfamily. Homodimer.

It localises to the cytoplasm. The catalysed reaction is tRNA(Pro) + L-proline + ATP = L-prolyl-tRNA(Pro) + AMP + diphosphate. Catalyzes the attachment of proline to tRNA(Pro) in a two-step reaction: proline is first activated by ATP to form Pro-AMP and then transferred to the acceptor end of tRNA(Pro). As ProRS can inadvertently accommodate and process non-cognate amino acids such as alanine and cysteine, to avoid such errors it has two additional distinct editing activities against alanine. One activity is designated as 'pretransfer' editing and involves the tRNA(Pro)-independent hydrolysis of activated Ala-AMP. The other activity is designated 'posttransfer' editing and involves deacylation of mischarged Ala-tRNA(Pro). The misacylated Cys-tRNA(Pro) is not edited by ProRS. This is Proline--tRNA ligase from Psychrobacter cryohalolentis (strain ATCC BAA-1226 / DSM 17306 / VKM B-2378 / K5).